The following is a 380-amino-acid chain: Cytochrome b (380 aa).

Transmembrane regions (helical) follow at residues 33–53 (FGSL…FLAM), 77–98 (WLIR…YLHI), 113–133 (WNVG…GYVL), and 178–198 (FFAF…LHFL). Residues His-83 and His-97 each contribute to the heme b site. Heme b-binding residues include His-182 and His-196. His-201 contacts a ubiquinone. 4 helical membrane passes run 226-246 (YKDL…SLFS), 288-308 (LGGV…PILH), 320-340 (LTQI…WIGG), and 347-367 (FIIV…VIMP).

Belongs to the cytochrome b family. In terms of assembly, the cytochrome bc1 complex contains 3 respiratory subunits (MT-CYB, CYC1 and UQCRFS1), 2 core proteins (UQCRC1 and UQCRC2) and probably 6 low-molecular weight proteins. Requires heme b as cofactor.

The protein resides in the mitochondrion inner membrane. In terms of biological role, component of the ubiquinol-cytochrome c reductase complex (complex III or cytochrome b-c1 complex) that is part of the mitochondrial respiratory chain. The b-c1 complex mediates electron transfer from ubiquinol to cytochrome c. Contributes to the generation of a proton gradient across the mitochondrial membrane that is then used for ATP synthesis. This Zeus faber (John Dory) protein is Cytochrome b (mt-cyb).